Here is a 250-residue protein sequence, read N- to C-terminus: Probable transcriptional regulatory protein MAP_1030 (250 aa).

It belongs to the TACO1 family.

The protein resides in the cytoplasm. The sequence is that of Probable transcriptional regulatory protein MAP_1030 from Mycolicibacterium paratuberculosis (strain ATCC BAA-968 / K-10) (Mycobacterium paratuberculosis).